We begin with the raw amino-acid sequence, 495 residues long: Nitrogen fixation regulatory protein (495 aa).

The region spanning 23 to 93 (HPGLFFTMVE…QEMWQTLLQR (71 aa)) is the PAS 1 domain. Residues 94-148 (QPWRGQLINQARDGGLYLVDIDITPVLNPQGELEHYLAMQRDISVSYTLEQRLRN) form the PAC domain. One can recognise a PAS 2; truncated domain in the interval 151–174 (TLMEAVLNNIPAAVVVVDEQDRVV).

FAD is required as a cofactor.

Functionally, required for the inhibition of NifA activity in response to oxygen and low level of fixed nitrogen. The protein is Nitrogen fixation regulatory protein (nifL) of Klebsiella pneumoniae.